The following is a 197-amino-acid chain: MTKKKSKNIKFCRREGENLEFFSEKKYLEKSRSNLTPGENGTEKGKVSDFGLILRTKQKIKRYYCIFEKEFKKIYFIIKKNFFNNIDLINFLERRLDNVIYRFNFSISRKESRQLIIHGNVFVNYFKNKIPSYLLSPGDVITINKKFLLKKYLYDYKNILFVNWLYNKYFDGYGIFLSFSNKNLFNLNKNLILDIYK.

Residues 94-158 (RRLDNVIYRF…LKKYLYDYKN (65 aa)) form the S4 RNA-binding domain.

This sequence belongs to the universal ribosomal protein uS4 family. Part of the 30S ribosomal subunit. Contacts protein S5. The interaction surface between S4 and S5 is involved in control of translational fidelity.

One of the primary rRNA binding proteins, it binds directly to 16S rRNA where it nucleates assembly of the body of the 30S subunit. Its function is as follows. With S5 and S12 plays an important role in translational accuracy. The polypeptide is Small ribosomal subunit protein uS4 (rpsD) (Carsonella ruddii (strain PV)).